An 833-amino-acid polypeptide reads, in one-letter code: Heat shock transcription factor (833 aa).

The residue at position 1 (Met-1) is an N-acetylmethionine. A compositionally biased stretch (polar residues) spans 1-16 (MNNAANTGTTNESNVS). Disordered stretches follow at residues 1–31 (MNNA…NDDD) and 62–92 (NPSL…STHL). The span at 69–80 (SAASPVPSSSFF) shows a compositional bias: low complexity. At Thr-97 the chain carries Phosphothreonine. Polar residues predominate over residues 150–161 (PSSGTTNAQPRQ). Disordered regions lie at residues 150-170 (PSSG…QSHK) and 277-309 (GSSN…NNSN). Residues 170 to 259 (KSRPAFVNKL…SDDKWQFENE (90 aa)) mediate DNA binding. The interval 260–280 (NFIRGREDLLEKIIRQKGSSN) is flexible linker. Residues 277–296 (GSSNNHNSPSGNGNPANGSN) are compositionally biased toward low complexity. An involved in trimerization region spans residues 350–403 (ELEQIKYNQIAISKDLLRINKDNELLWQENMMARERHRTQQQALEKMFRFLTSI). Residues 447–457 (SNDSFINDDRN) are compositionally biased toward basic and acidic residues. The segment at 447–493 (SNDSFINDDRNSFTNATTNARNNMSPNNDDNSIDTASTNTTNRKKNI) is disordered. Phosphoserine is present on residues Ser-450, Ser-458, Ser-471, Ser-478, and Ser-528. Positions 458–487 (SFTNATTNARNNMSPNNDDNSIDTASTNTT) are enriched in polar residues. The segment covering 542 to 554 (RANSSTSSENPSL) has biased composition (polar residues). 3 disordered regions span residues 542-626 (RANS…HNES), 657-765 (GYPN…RVSP), and 778-799 (SDNL…APEN). Residues 571–580 (PFDDEEEEET) are compositionally biased toward acidic residues. Polar residues predominate over residues 588 to 600 (RDPNNQTSENTFD). Over residues 610–626 (DDLKKDSHTNDNKHNES) the composition is skewed to basic and acidic residues. The span at 660-675 (NKSFNNKTSSTNTNSN) shows a compositional bias: low complexity. The segment covering 676–687 (MESAVNVNSPGF) has biased composition (polar residues). Over residues 697–713 (SNSPNSVHSVPSNGSGS) the composition is skewed to low complexity. 3 stretches are compositionally biased toward polar residues: residues 727–739 (ASTS…NGSG), 752–763 (NDNNTSEGSTRV), and 778–794 (SDNL…TQAD).

Belongs to the HSF family. Homotrimer. Homotrimerization increases the affinity of HSF1 to DNA. Post-translationally, exhibits temperature-dependent phosphorylation that activates the transcriptional capacity.

Its subcellular location is the nucleus. In terms of biological role, DNA-binding transcription factor that specifically binds heat shock promoter elements (HSE) and activates transcription. The sequence is that of Heat shock transcription factor from Saccharomyces cerevisiae (strain ATCC 204508 / S288c) (Baker's yeast).